The primary structure comprises 345 residues: Large ribosomal subunit protein uL10 (345 aa).

Positions 303-345 (SLPQTAAPQQTPQPTEAPKEEAQEEKKEGPSEEEIAGSLASLF) are disordered. Residues 305-318 (PQTAAPQQTPQPTE) are compositionally biased toward low complexity. Positions 319–332 (APKEEAQEEKKEGP) are enriched in basic and acidic residues.

The protein belongs to the universal ribosomal protein uL10 family. In terms of assembly, part of the 50S ribosomal subunit. Forms part of the ribosomal stalk which helps the ribosome interact with GTP-bound translation factors. Forms a heptameric L10(L12)2(L12)2(L12)2 complex, where L10 forms an elongated spine to which the L12 dimers bind in a sequential fashion.

Functionally, forms part of the ribosomal stalk, playing a central role in the interaction of the ribosome with GTP-bound translation factors. This is Large ribosomal subunit protein uL10 from Pyrobaculum aerophilum (strain ATCC 51768 / DSM 7523 / JCM 9630 / CIP 104966 / NBRC 100827 / IM2).